The following is a 124-amino-acid chain: Small ribosomal subunit protein uS12 (124 aa).

D89 carries the post-translational modification 3-methylthioaspartic acid. Positions 105–124 (QGVKNRKQARSRYGAKKEKS) are disordered. Residues 108–118 (KNRKQARSRYG) show a composition bias toward basic residues.

The protein belongs to the universal ribosomal protein uS12 family. As to quaternary structure, part of the 30S ribosomal subunit. Contacts proteins S8 and S17. May interact with IF1 in the 30S initiation complex.

In terms of biological role, with S4 and S5 plays an important role in translational accuracy. Interacts with and stabilizes bases of the 16S rRNA that are involved in tRNA selection in the A site and with the mRNA backbone. Located at the interface of the 30S and 50S subunits, it traverses the body of the 30S subunit contacting proteins on the other side and probably holding the rRNA structure together. The combined cluster of proteins S8, S12 and S17 appears to hold together the shoulder and platform of the 30S subunit. This Mycolicibacterium smegmatis (strain ATCC 700084 / mc(2)155) (Mycobacterium smegmatis) protein is Small ribosomal subunit protein uS12 (rpsL).